The following is a 588-amino-acid chain: Synaptotagmin-3 (588 aa).

At 1–54 (MSGDYEDDLCRRALILVSDLCARIRDADTNDRCQEFNELRIRGYPRGPDADISV) the chain is on the vesicular side. A cysteine motif region spans residues 10–34 (CRRALILVSDLCARIRDADTNDRCQ). Residues 55–75 (SLLSVIVTFCGIVLLGVSLFV) traverse the membrane as a helical segment. Topologically, residues 76-588 (SWKLCWVPWR…KGLSEKENSE (513 aa)) are cytoplasmic. 3 disordered regions span residues 129–161 (GGPH…PEPS), 183–222 (PSQT…VTSL), and 238–257 (QTLT…ALPL). The segment covering 183–205 (PSQTSPELPSEGGTGSGLLLLPP) has biased composition (low complexity). The segment covering 213-222 (AQSHQQVTSL) has biased composition (polar residues). The residue at position 286 (Arg286) is an Omega-N-methylarginine. 2 consecutive C2 domains span residues 297–418 (PCGR…PLWR) and 429–563 (DLGE…EHWH). The Ca(2+) site is built by Asp328, Asp334, Asp386, Phe387, Asp388, Ser391, Asp394, Asp460, Asp466, Asp520, and Asp522.

The protein belongs to the synaptotagmin family. Homodimer; disulfide-linked via the cysteine motif. Can also form heterodimers with SYT6, SYT9 and SYT10. Requires Ca(2+) as cofactor. As to expression, brain, various endocrine tissues and hormone-secreting clonal cells.

Its subcellular location is the cell membrane. The protein localises to the cytoplasmic vesicle. The protein resides in the secretory vesicle membrane. Ca(2+) sensor involved in Ca(2+)-dependent exocytosis of secretory vesicles through Ca(2+) and phospholipid binding to the C2 domain. Ca(2+) induces binding of the C2-domains to phospholipid membranes and to assembled SNARE-complexes; both actions contribute to triggering exocytosis. Plays a role in dendrite formation by melanocytes. The polypeptide is Synaptotagmin-3 (Syt3) (Rattus norvegicus (Rat)).